The sequence spans 316 residues: Alkaline ceramidase YPC1 (316 aa).

Over 1–36 the chain is Lumenal; sequence MGIFRWNYPESSVPGVWGETTSTIDWCEENYVVSPY. A disulfide bridge connects residues Cys-27 and Cys-219. An intramembrane segment occupies 37–57; that stretch reads IAEWSNTLTNSVFILSAIYTT. Residues 58–68 are Lumenal-facing; the sequence is YSAYKNKLEKR. The stretch at 69-89 is an intramembrane region; that stretch reads FLLIGFGYGLVGVGSWLFHMT. Over 90 to 93 the chain is Lumenal; sequence LKYR. A helical membrane pass occupies residues 94-114; it reads FQLLDELPMIYAMCIPTWSLV. Residues 115 to 135 lie on the Cytoplasmic side of the membrane; that stretch reads CEAKEALLNGDNHKKVPLFEQ. Residues 136–156 traverse the membrane as a helical segment; the sequence is IFIGVIIGLAVTTASILYVIY. The Lumenal segment spans residues 157 to 160; that stretch reads KNVD. An intramembrane segment occupies 161–181; that stretch reads IHQILFGVQIVVVAATAGSLT. At 182-195 the chain is on the lumenal side; that stretch reads YRYVHDPLAKRNLK. An intramembrane segment occupies 196 to 216; it reads ASMALGAILFLSGYISWLLDI. The Lumenal segment spans residues 217–228; sequence HYCSFWVHVRRS. Residues 229–249 traverse the membrane as a helical segment; sequence ILALPLGVLLEPHGWWHILTG. At 250–316 the chain is on the cytoplasmic side; that stretch reads MGIYFYIVSL…DQSIEVKKEK (67 aa).

It belongs to the alkaline ceramidase family.

It is found in the endoplasmic reticulum membrane. The enzyme catalyses N-hexanoyl-sphinganine + H2O = hexanoate + sphinganine. It carries out the reaction sphinganine + hexadecanoate = N-hexadecanoylsphinganine + H2O. It catalyses the reaction N-hexadecanoyl-(4R)-hydroxysphinganine + H2O = (4R)-hydroxysphinganine + hexadecanoate. The catalysed reaction is N-hexadecanoylsphing-4-enine + H2O = sphing-4-enine + hexadecanoate. The enzyme catalyses an N-acyl-(4R)-4-hydroxysphinganine + H2O = (4R)-hydroxysphinganine + a fatty acid. In terms of biological role, alkaline ceramidase that hydrolyzes phytoceramide and also dihydroceramide into phytosphingosine or dihydrosphingosine. Prefers phytoceramide. Also has reverse activity as acyl-CoA-independent ceramide synthase, catalyzing synthesis of phytoceramide and dihydroceramide from palmitic acid and phytosphingosine or dihydrosphingosine. Is not responsible for the breakdown of unsaturated ceramide. Preferentially uses very long chain fatty acids (C-24 and C-26) in vivo compared to C-16 in vitro. The polypeptide is Alkaline ceramidase YPC1 (YPC1) (Saccharomyces cerevisiae (strain ATCC 204508 / S288c) (Baker's yeast)).